The sequence spans 316 residues: Ribosomal RNA small subunit methyltransferase H (316 aa).

S-adenosyl-L-methionine contacts are provided by residues 35–37 (GGH), aspartate 55, phenylalanine 80, aspartate 102, and glutamine 109.

It belongs to the methyltransferase superfamily. RsmH family.

It is found in the cytoplasm. It catalyses the reaction cytidine(1402) in 16S rRNA + S-adenosyl-L-methionine = N(4)-methylcytidine(1402) in 16S rRNA + S-adenosyl-L-homocysteine + H(+). Specifically methylates the N4 position of cytidine in position 1402 (C1402) of 16S rRNA. This chain is Ribosomal RNA small subunit methyltransferase H, found in Colwellia psychrerythraea (strain 34H / ATCC BAA-681) (Vibrio psychroerythus).